The following is a 435-amino-acid chain: Astacin-like metalloendopeptidase (435 aa).

Residues 1–23 form the signal peptide; it reads MGIMGSLWPWILTMLSLLGLSMG. A Peptidase M12A domain is found at 85–282; sequence RLLSVTNNKW…TRVCRLYNCS (198 aa). 2 cysteine pairs are disulfide-bonded: C132–C281 and C153–C172. Residue H182 participates in Zn(2+) binding. E183 is an active-site residue. H186 and H192 together coordinate Zn(2+). Low complexity predominate over residues 318-329; that stretch reads SEESGSSAPSGS. A disordered region spans residues 318-356; sequence SEESGSSAPSGSRTGGQSIAGLGNSQQGWEHPPQSTFSV. The span at 340–355 shows a compositional bias: polar residues; it reads GNSQQGWEHPPQSTFS.

As to quaternary structure, interacts (via N-terminal domain) with SPACA3; the interaction occurs during fertilization. Zn(2+) is required as a cofactor. As to expression, ovary-specific. Expressed in secondary, antral and Graafian follicle oocytes. Expressed in the egg cells. Not detected in two-cell embryos. Not detected in naked oocytes, oocytes in primordial or unilaminar primary follicles, or in any other ovarian cells at pre-pubertal, pubertal or adult stages (at protein level). Ovary-specific.

The protein resides in the cytoplasm. It localises to the cell membrane. Its subcellular location is the cytoplasmic vesicle. The protein localises to the secretory vesicle. It is found in the cortical granule. Inhibited by wide spectrum metalloproteinase inhibitor batimastat (BB-94). Also inhibited by EDTA. Its function is as follows. Oocyte-specific oolemmal receptor involved in sperm and egg adhesion and fertilization. Plays a role in the polyspermy inhibition. Probably acts as a protease for the post-fertilization cleavage of ZP2. Cleaves the sperm-binding ZP2 at the surface of the zona pellucida after fertilization and cortical granule exocytosis, rendering the zona pellucida unable to support further sperm binding. This Mus musculus (Mouse) protein is Astacin-like metalloendopeptidase.